The sequence spans 245 residues: MKFGKRIKEQIQESLPEWRDKFLRYKELKNLISSPAPVESIFVGLLNAEIDKFNAFFVEQEEDFIIHHKELQYRIQRLVEKCGHNDEMSRENISEIRKDIVNFHGEMVLLVNYSNINYTGLAKILKKYDKRTRGGLRSPFIQKVLHQPFFKTDLVSRLVREWETTMDAVDPVKVAEAEGYERCAAVTSAAAGEGIFRNTVAALLTMKEMRRGSSTYSAFSLPPLNISDSDNVLRSLHLSSPIPIP.

Positions 1–142 (MKFGKRIKEQ…RGGLRSPFIQ (142 aa)) constitute an SPX domain.

Its function is as follows. Plays a positive role in plant adaptation to phosphate starvation and exerts negative feedback regulation of SPX1. This is SPX domain-containing protein 3 (SPX3) from Arabidopsis thaliana (Mouse-ear cress).